The following is a 471-amino-acid chain: Putative multidrug resistance protein MdtD (471 aa).

Residues 1–11 lie on the Periplasmic side of the membrane; sequence MTELPDSTRWQ. A helical transmembrane segment spans residues 12–32; sequence LWIVAFGFFMQSLDTTIVNTA. Topologically, residues 33 to 48 are cytoplasmic; the sequence is LPSMAQSLGESPLHMH. A helical membrane pass occupies residues 49 to 69; the sequence is MVIVSYVLTVAVMLPASGWLA. Residues 70–76 are Periplasmic-facing; sequence DKVGVRN. Residues 77–97 traverse the membrane as a helical segment; that stretch reads IFFTAIVLFTLGSLFCALSGT. Over 98–101 the chain is Cytoplasmic; the sequence is LNEL. Residues 102–124 form a helical membrane-spanning segment; it reads LLARALQGVGGAMMVPVGRLTVM. The Periplasmic segment spans residues 125–137; sequence KIVPREQYMAAMT. Residues 138–158 traverse the membrane as a helical segment; the sequence is FVTLPGQVGPLLGPALGGLLV. Residues 159–164 lie on the Cytoplasmic side of the membrane; that stretch reads EYASWH. A helical transmembrane segment spans residues 165–185; that stretch reads WIFLINIPVGIIGAIATLLLM. Residues 186–196 lie on the Periplasmic side of the membrane; it reads PNYTMQTRRFD. The chain crosses the membrane as a helical span at residues 197-217; it reads LSGFLLLAVGMAVLTLALDGS. Over 218–224 the chain is Cytoplasmic; the sequence is KGTGLSP. A helical transmembrane segment spans residues 225-245; sequence LAIAGLVAVGVVALVLYLLHA. The Periplasmic portion of the chain corresponds to 246–262; the sequence is RNNNRALFSLKLFRTRT. The chain crosses the membrane as a helical span at residues 263–283; it reads FSLGLAGSFAGRIGSGMLPFM. At 284-285 the chain is on the cytoplasmic side; sequence TP. The chain crosses the membrane as a helical span at residues 286-306; it reads VFLQIGLGFSPFHAGLMMIPM. Residues 307 to 341 lie on the Periplasmic side of the membrane; the sequence is VLGSMGMKRIVVQVVNRFGYRRVLVATTLGLSLIT. Residues 342-362 form a helical membrane-spanning segment; that stretch reads LLFMTTALLGWYYVLPFVLFL. Residues 363–395 are Cytoplasmic-facing; that stretch reads QGMVNSTRFSSMNTLTLKDLPDNLASSGNSLLS. A helical membrane pass occupies residues 396–416; the sequence is MIMQLSMSIGVTIAGLLLGLF. The Periplasmic portion of the chain corresponds to 417–430; the sequence is GSQHVSVDSGTTQT. A helical transmembrane segment spans residues 431 to 451; it reads VFMYTWLSMAFIIALPAFIFA. The Cytoplasmic segment spans residues 452-471; that stretch reads RVPNDTHQNVAISRRKRSAQ.

It belongs to the major facilitator superfamily. TCR/Tet family.

The protein resides in the cell inner membrane. This chain is Putative multidrug resistance protein MdtD, found in Shigella sonnei (strain Ss046).